The following is a 167-amino-acid chain: Ion-translocating oxidoreductase complex subunit B (167 aa).

Residues 1 to 22 (MITLIIFSFLSFLLGIILSFTA) form a hydrophobic region. The 4Fe-4S domain maps to 28 to 87 (QEDPIVEIVNELLPQSQCAQCGYSGCYPYAKAIVENSEKINKCIPGGTDLISAISSVLSI). Positions 45, 48, 53, 70, 113, 116, 119, 123, 143, 146, 149, and 153 each coordinate [4Fe-4S] cluster. 4Fe-4S ferredoxin-type domains follow at residues 104–133 (NTVLINESNCVGCSKCASFCPVDAIVGAPN) and 134–163 (FIHTVLQEFCTGCNICLLHCPTNCIEIKKE).

This sequence belongs to the 4Fe4S bacterial-type ferredoxin family. RnfB subfamily. In terms of assembly, the complex is composed of six subunits: RnfA, RnfB, RnfC, RnfD, RnfE and RnfG. The cofactor is [4Fe-4S] cluster.

Its subcellular location is the cell inner membrane. In terms of biological role, part of a membrane-bound complex that couples electron transfer with translocation of ions across the membrane. This chain is Ion-translocating oxidoreductase complex subunit B, found in Buchnera aphidicola subsp. Acyrthosiphon pisum (strain Tuc7).